Reading from the N-terminus, the 223-residue chain is MKIDITDYNHADEILNPQLWKEIEETLLKMPLHVKASDQASKVGSLIFDPVGTNQYIKDELVPKHWKNNIPIPKRFDFLGTDIDFGKRDTLVEVQFSNYPFLLNNTVRSELFHKSNMDIDEEGMKVAIIITKGHMFPASNSSLYYEQAQNQLNSLAEYNVFDVPIRLVGLIEDFETDIDIVSTTYADKRYSRTITKRDTVKGKVIDTNTPNTRRRKRGTIVTY.

Mg(2+) is bound by residues D84 and V94.

Homodimer. Requires Mg(2+) as cofactor.

It catalyses the reaction Endonucleolytic cleavage of DNA to give specific double-stranded fragments with terminal 5'-phosphates.. In terms of biological role, a P subtype restriction enzyme that recognizes the double-stranded sequence 5'-AGATCT-3' and cleaves after A-1. The protein is Type II restriction enzyme BglII (bglIIR) of Bacillus subtilis.